Here is a 106-residue protein sequence, read N- to C-terminus: Evasin P1168 (106 aa).

Residues M1–A24 form the signal peptide. 3 cysteine pairs are disulfide-bonded: C45-C67, C49-C69, and C60-C80. N-linked (GlcNAc...) asparagine glycans are attached at residues N48, N54, and N64.

The protein localises to the secreted. Salivary chemokine-binding protein which binds to host chemokines CXCL1, CXCL2 and CXCL8. This Ixodes ricinus (Common tick) protein is Evasin P1168.